The following is a 787-amino-acid chain: Endonuclease MutS2 (787 aa).

Position 329–336 (329–336 (GPNTGGKT)) interacts with ATP. Residues 712 to 787 (INLLGCTVDE…DAGVTIVDFK (76 aa)) form the Smr domain.

Belongs to the DNA mismatch repair MutS family. MutS2 subfamily. In terms of assembly, homodimer. Binds to stalled ribosomes, contacting rRNA.

Its function is as follows. Endonuclease that is involved in the suppression of homologous recombination and thus may have a key role in the control of bacterial genetic diversity. Acts as a ribosome collision sensor, splitting the ribosome into its 2 subunits. Detects stalled/collided 70S ribosomes which it binds and splits by an ATP-hydrolysis driven conformational change. Acts upstream of the ribosome quality control system (RQC), a ribosome-associated complex that mediates the extraction of incompletely synthesized nascent chains from stalled ribosomes and their subsequent degradation. Probably generates substrates for RQC. This Lachnospira eligens (strain ATCC 27750 / DSM 3376 / VPI C15-48 / C15-B4) (Eubacterium eligens) protein is Endonuclease MutS2.